The chain runs to 794 residues: Copper amine oxidase-like protein cao2 (794 aa).

Residues 307 to 318 (AYDLGEYGVGYR) and 391 to 396 (AANYEY) contribute to the substrate site. Residue D309 is the Proton acceptor of the active site. Y394 acts as the Schiff-base intermediate with substrate; via topaquinone in catalysis. Y394 is modified (2',4',5'-topaquinone). Positions 445 and 447 each coordinate Cu cation. A disordered region spans residues 563 to 584 (GDYAPQASDDTPKGLSKWISDD). 2 residues coordinate Mn(2+): D593 and I594. Residue H604 coordinates Cu cation. The segment at 634-748 (ALDTSSSVNS…NGGHHHHHHH (115 aa)) is disordered. The segment covering 637-649 (TSSSVNSTSEATS) has biased composition (low complexity). A compositionally biased stretch (basic and acidic residues) spans 652–714 (THHENLRDTS…DAAQKHEGRS (63 aa)). Residues 716–727 (TLAQPGQQNANQ) are compositionally biased toward polar residues.

The protein belongs to the copper/topaquinone oxidase family. In terms of assembly, homodimer. The cofactor is Cu cation. It depends on Zn(2+) as a cofactor. Requires L-topaquinone as cofactor. Mn(2+) serves as cofactor. Topaquinone (TPQ) is generated by copper-dependent autoxidation of a specific tyrosyl residue.

The protein resides in the cytoplasm. It carries out the reaction a primary methyl amine + O2 + H2O = an aldehyde + H2O2 + NH4(+). Copper amine oxidase-like protein that does not show any copper amine oxidase activity. May be the appropriate amine substrate for cao2 has not been identified yet. This is Copper amine oxidase-like protein cao2 (cao2) from Schizosaccharomyces pombe (strain 972 / ATCC 24843) (Fission yeast).